A 195-amino-acid chain; its full sequence is Glycerol-3-phosphate acyltransferase 2 (195 aa).

6 helical membrane passes run 4-24 (VVSL…VAGV), 52-72 (GAAA…VGLA), 73-93 (LWLA…GVVF), 115-135 (AMLV…LALI), 150-170 (AIPF…SRLG), and 171-191 (GGAE…HLLA).

It belongs to the PlsY family. Probably interacts with PlsX.

The protein localises to the cell membrane. The enzyme catalyses an acyl phosphate + sn-glycerol 3-phosphate = a 1-acyl-sn-glycero-3-phosphate + phosphate. Its pathway is lipid metabolism; phospholipid metabolism. Functionally, catalyzes the transfer of an acyl group from acyl-phosphate (acyl-PO(4)) to glycerol-3-phosphate (G3P) to form lysophosphatidic acid (LPA). This enzyme utilizes acyl-phosphate as fatty acyl donor, but not acyl-CoA or acyl-ACP. The chain is Glycerol-3-phosphate acyltransferase 2 from Deinococcus radiodurans (strain ATCC 13939 / DSM 20539 / JCM 16871 / CCUG 27074 / LMG 4051 / NBRC 15346 / NCIMB 9279 / VKM B-1422 / R1).